A 248-amino-acid polypeptide reads, in one-letter code: Thioredoxin-like protein AAED1, chloroplastic (248 aa).

Residues 1 to 52 (MAIALSSSSTITSITLQPKLKTIHGLGTVLPGYSVKSHFRSVSLRRSAVVVS) constitute a chloroplast transit peptide. An N-acetylalanine modification is found at Ala53.

Belongs to the peroxiredoxin-like PRXL2 family. PRXL2C subfamily.

The protein localises to the plastid. It is found in the chloroplast. The protein is Thioredoxin-like protein AAED1, chloroplastic of Arabidopsis thaliana (Mouse-ear cress).